A 985-amino-acid polypeptide reads, in one-letter code: Ephrin type-B receptor 1-A (985 aa).

An N-terminal signal peptide occupies residues 1–19; sequence MELNVLLLLLCLSGGQVGA. Residues 20-542 lie on the Extracellular side of the membrane; the sequence is VEETLMDTRT…YKSELREQLP (523 aa). The region spanning 21–203 is the Eph LBD domain; the sequence is EETLMDTRTA…FFKEMPSVVQ (183 aa). Fibronectin type-III domains are found at residues 324-434 and 435-532; these read VPSG…TNQA and APSS…TAED. N-linked (GlcNAc...) asparagine glycans are attached at residues N336, N428, and N482. A helical membrane pass occupies residues 543–563; it reads LTGSAAAGVVFIVSLVAISIV. Topologically, residues 564-985 are cytoplasmic; sequence CSRKRTYSKE…QITQSPTSIA (422 aa). The Protein kinase domain maps to 620–883; the sequence is VKIEEVIGAG…EIVNTLRPMI (264 aa). ATP-binding positions include 626–634 and K652; that span reads IGAGEFGEV. D745 acts as the Proton acceptor in catalysis. In terms of domain architecture, SAM spans 912-976; that stretch reads SAFTSVDDWL…LNSIQSMRVQ (65 aa). Residues 983 to 985 carry the PDZ-binding motif; that stretch reads SIA.

It belongs to the protein kinase superfamily. Tyr protein kinase family. Ephrin receptor subfamily. Heterotetramer upon binding of the ligand. The heterotetramer is composed of an ephrin dimer and a receptor dimer. Oligomerization is probably required to induce biological responses. Phosphorylated. Autophosphorylation is stimulated by ligands.

Its subcellular location is the cell membrane. It is found in the early endosome membrane. It localises to the cell projection. The protein resides in the dendrite. The catalysed reaction is L-tyrosyl-[protein] + ATP = O-phospho-L-tyrosyl-[protein] + ADP + H(+). Its function is as follows. Receptor tyrosine kinase which binds promiscuously transmembrane ephrin-B family ligands residing on adjacent cells, leading to contact-dependent bidirectional signaling into neighboring cells. The signaling pathway downstream of the receptor is referred to as forward signaling while the signaling pathway downstream of the ephrin ligand is referred to as reverse signaling. May play a role in axon guidance during nervous system development. May also play an important redundant role with other ephrin-B receptors in development and maturation of dendritic spines and synapse formation. More generally, may play a role in targeted cell migration and adhesion. Upon activation by ephrin-B ligands activates the MAPK/ERK and the JNK signaling cascades to regulate cell migration and adhesion respectively. This Xenopus laevis (African clawed frog) protein is Ephrin type-B receptor 1-A (ephb1-a).